The sequence spans 376 residues: Pyruvate dehydrogenase E1 component subunit beta-2, mitochondrial (376 aa).

The N-terminal 36 residues, 1–36 (MLGAARRQLGSGPMLGQVLRRLRPATAAAADAARAY), are a transit peptide targeting the mitochondrion. A thiamine diphosphate-binding site is contributed by glutamate 99. Residues isoleucine 152, alanine 200, isoleucine 201, and aspartate 203 each contribute to the K(+) site.

Tetramer of 2 alpha and 2 beta subunits. Thiamine diphosphate serves as cofactor.

It localises to the mitochondrion matrix. It carries out the reaction N(6)-[(R)-lipoyl]-L-lysyl-[protein] + pyruvate + H(+) = N(6)-[(R)-S(8)-acetyldihydrolipoyl]-L-lysyl-[protein] + CO2. The pyruvate dehydrogenase complex catalyzes the overall conversion of pyruvate to acetyl-CoA and CO(2). It contains multiple copies of three enzymatic components: pyruvate dehydrogenase (E1), dihydrolipoamide acetyltransferase (E2) and lipoamide dehydrogenase (E3). The protein is Pyruvate dehydrogenase E1 component subunit beta-2, mitochondrial of Oryza sativa subsp. japonica (Rice).